A 311-amino-acid chain; its full sequence is tRNA dimethylallyltransferase (311 aa).

An ATP-binding site is contributed by 11–18 (GPTASGKS). A substrate-binding site is contributed by 13-18 (TASGKS). Interaction with substrate tRNA regions lie at residues 36-39 (DSMQ) and 160-164 (QRLIR).

The protein belongs to the IPP transferase family. Monomer. Requires Mg(2+) as cofactor.

The enzyme catalyses adenosine(37) in tRNA + dimethylallyl diphosphate = N(6)-dimethylallyladenosine(37) in tRNA + diphosphate. Its function is as follows. Catalyzes the transfer of a dimethylallyl group onto the adenine at position 37 in tRNAs that read codons beginning with uridine, leading to the formation of N6-(dimethylallyl)adenosine (i(6)A). The sequence is that of tRNA dimethylallyltransferase from Rickettsia typhi (strain ATCC VR-144 / Wilmington).